We begin with the raw amino-acid sequence, 230 residues long: 7-cyano-7-deazaguanine synthase (230 aa).

16–26 (LSGGLDSATVV) provides a ligand contact to ATP. Positions 195, 205, 208, and 211 each coordinate Zn(2+).

This sequence belongs to the QueC family. Zn(2+) is required as a cofactor.

It catalyses the reaction 7-carboxy-7-deazaguanine + NH4(+) + ATP = 7-cyano-7-deazaguanine + ADP + phosphate + H2O + H(+). The protein operates within purine metabolism; 7-cyano-7-deazaguanine biosynthesis. In terms of biological role, catalyzes the ATP-dependent conversion of 7-carboxy-7-deazaguanine (CDG) to 7-cyano-7-deazaguanine (preQ(0)). This is 7-cyano-7-deazaguanine synthase from Pseudomonas fluorescens (strain Pf0-1).